Reading from the N-terminus, the 1026-residue chain is HEAT repeat-containing protein 4 (1026 aa).

A disordered region spans residues 135-175 (AVKTESSANPEKKLKKSKPASTVREAPRPLIHHPCMHPDML). 3 HEAT repeats span residues 530 to 568 (LLPALEAALCDKNAHVRMAAAICQYAIQSHNPLARNIMQ), 724 to 760 (KLMTAKLLPSFLHCFSDDFTAVRRAACLAAGALQIRD), and 761 to 794 (KMVLECLLNLMQRDPYWKIKAFAIRALGQIGQVS).

The protein is HEAT repeat-containing protein 4 (HEATR4) of Homo sapiens (Human).